Consider the following 309-residue polypeptide: MLDICLLGCGGSLPTSDRNLTSLLISYNGRKILIDCGEGTQVSMKEIAWGFKDIDVICFTHYHADHVMGLTGLLLTIANSGRIDPLTIIGPEGLREVVKGLTVVAPFFPYEIELIELDSKCSDNFLDKVFKIEDVEIFALPVDHSIECLSYSVRVNRKRKFDVNKAKANEVPLKIWNELQRGKEITYENKLYVPDMVLGESRKGIKITYCTDTRPVDSLHKFAYKSDLFVCEGMYGEEEKKEKAVDKKHMIFSEAAGIAKAAEVKELWLTHFSPALSEPEKYLENAKEIFENTHIGSDRKIKIINFENN.

Zn(2+) is bound by residues His-61, His-63, Asp-65, His-66, His-144, Asp-212, and His-271. The Proton acceptor role is filled by Asp-65.

Belongs to the RNase Z family. Homodimer. Requires Zn(2+) as cofactor.

It catalyses the reaction Endonucleolytic cleavage of RNA, removing extra 3' nucleotides from tRNA precursor, generating 3' termini of tRNAs. A 3'-hydroxy group is left at the tRNA terminus and a 5'-phosphoryl group is left at the trailer molecule.. Zinc phosphodiesterase, which displays some tRNA 3'-processing endonuclease activity. Probably involved in tRNA maturation, by removing a 3'-trailer from precursor tRNA. The polypeptide is Ribonuclease Z (Clostridium acetobutylicum (strain ATCC 824 / DSM 792 / JCM 1419 / IAM 19013 / LMG 5710 / NBRC 13948 / NRRL B-527 / VKM B-1787 / 2291 / W)).